A 326-amino-acid chain; its full sequence is Centriolar satellite-associated tubulin polyglutamylase complex regulator 1 (326 aa).

Residues 1 to 111 (MLSPERLALP…HCLLQLLCPD (111 aa)) form a required for interaction with PCM1 region. The interval 1–225 (MLSPERLALP…SCPPPALVKE (225 aa)) is required for interaction with TPGS1, LRRC49, and TTLL1.

This sequence belongs to the CSTPP1 family. In terms of assembly, interacts with PCM1. Interacts with TTLL1, TPGS1, TPGS2 and LRRC49; the interactions link CSTPP1 to the complex TPGC. Binds to alpha-tubulin.

The protein resides in the cytoplasm. Its subcellular location is the cytoskeleton. The protein localises to the microtubule organizing center. It is found in the centrosome. It localises to the centriolar satellite. Its function is as follows. Regulator of the tubulin polyglutamylase complex (TPGC) that controls cytoskeletal organization, nuclear shape, and cilium disassembly by balancing microtubule and actin assembly. Regulates the assembly and stability of the TPGC and thereby modulates polyglutamylation of the microtubule, which antagonizes MAP4 binding. This is Centriolar satellite-associated tubulin polyglutamylase complex regulator 1 (CSTPP1) from Bos taurus (Bovine).